Reading from the N-terminus, the 443-residue chain is Ribosomal protein uS12 methylthiotransferase RimO (443 aa).

The 111-residue stretch at 5-115 (PNIGFISLGC…VMKHVHKYVP (111 aa)) folds into the MTTase N-terminal domain. 6 residues coordinate [4Fe-4S] cluster: cysteine 14, cysteine 50, cysteine 79, cysteine 147, cysteine 151, and cysteine 154. Residues 133–374 (LTPKHYAYLK…MQVQQRISAA (242 aa)) form the Radical SAM core domain. Positions 377–443 (QQKVGKTLAV…ADEYDLWGTC (67 aa)) constitute a TRAM domain.

It belongs to the methylthiotransferase family. RimO subfamily. Requires [4Fe-4S] cluster as cofactor.

Its subcellular location is the cytoplasm. The enzyme catalyses L-aspartate(89)-[ribosomal protein uS12]-hydrogen + (sulfur carrier)-SH + AH2 + 2 S-adenosyl-L-methionine = 3-methylsulfanyl-L-aspartate(89)-[ribosomal protein uS12]-hydrogen + (sulfur carrier)-H + 5'-deoxyadenosine + L-methionine + A + S-adenosyl-L-homocysteine + 2 H(+). In terms of biological role, catalyzes the methylthiolation of an aspartic acid residue of ribosomal protein uS12. The chain is Ribosomal protein uS12 methylthiotransferase RimO from Actinobacillus pleuropneumoniae serotype 7 (strain AP76).